Reading from the N-terminus, the 473-residue chain is TOX high mobility group box family member 2 (473 aa).

Disordered regions lie at residues 1-42 (MSDG…SLLH), 139-211 (GLRS…VSAY), 277-302 (SKSPPDQGEAKNAQANPPAKMLPPKQ), and 340-473 (LLPG…PSAR). Residues 8-20 (LLSTSQTYNSQGE) are compositionally biased toward polar residues. The required for transcriptional activation stretch occupies residues 25–63 (YEIPPITPPNLPEPSLLHLGDHEAGYHSLCHGLAPNGLL). The span at 153 to 164 (GSKSATPSPSSS) shows a compositional bias: low complexity. Positions 171 to 188 (DAHFKISGEKRPSTDPGK) are enriched in basic and acidic residues. The short motif at 172 to 201 (AHFKISGEKRPSTDPGKKAKNPKKKKKKDP) is the Nuclear localization signal element. The segment covering 189-199 (KAKNPKKKKKK) has biased composition (basic residues). The segment at residues 204-272 (PQKPVSAYAL…EYLKALAAYR (69 aa)) is a DNA-binding region (HMG box). Composition is skewed to low complexity over residues 373 to 382 (LLSPPLSMSP) and 415 to 440 (SDFPSGSGSRSPGPSNPSSSGDWDGS). The span at 463–473 (SPKNLQEPSAR) shows a compositional bias: polar residues.

As to expression, highly expressed in ovary, where it is restricted to undifferentiated granulosa cells. Expressed in hypothalamus, pituitary gland, testis and uterus.

Its subcellular location is the nucleus. Functionally, putative transcriptional activator involved in the hypothalamo-pituitary-gonadal system. The chain is TOX high mobility group box family member 2 (Tox2) from Rattus norvegicus (Rat).